Reading from the N-terminus, the 447-residue chain is MSSRLPALPLSRRQALLGGAGSAAALLLPGGAQAQTRLQITEGNVAPMPIAIPNFVAGTPADNEVGLGVAQVITNNLKRSGLFAPIDQAAFIERISNIDTPPQFQSWKTINAQALVTGRMTKQGDGRLKAEFRLWDVAAGQQLTGQQYFTSPEYWRRIAHIISDQIYERLTGEKGYFDSRVVFIDETGSKERRVKRLALMDQDGANVRYLTRGADLVLTPRFSPSTQEITYMEFGQGDPRVYLFNIETGQREIVGNFPGMSFSPRFSPDGQRVIMSLQQGGNSNLFVMDLRSKSTTRLTDTPAIDTSPSYAPDGSKICFESDRGGKPQIYVMPAGGGGAQRISFGEGSYSTPVWSPRGDYIAFTKQGGGQFSIGIMKPDGSGERLLTSGYHNEGPTFAPNGRVLMFFRDPGGNGGPSLFTVDISGRNEQKVPTPGFASDPAWSPLLS.

The first 34 residues, 1-34 (MSSRLPALPLSRRQALLGGAGSAAALLLPGGAQA), serve as a signal peptide directing secretion. The segment at 426–447 (RNEQKVPTPGFASDPAWSPLLS) is disordered.

The protein belongs to the TolB family. The Tol-Pal system is composed of five core proteins: the inner membrane proteins TolA, TolQ and TolR, the periplasmic protein TolB and the outer membrane protein Pal. They form a network linking the inner and outer membranes and the peptidoglycan layer.

The protein localises to the periplasm. Its function is as follows. Part of the Tol-Pal system, which plays a role in outer membrane invagination during cell division and is important for maintaining outer membrane integrity. The polypeptide is Tol-Pal system protein TolB (Rhodopseudomonas palustris (strain BisB18)).